Reading from the N-terminus, the 394-residue chain is Chaperone protein DnaJ (394 aa).

Residues Asp-4–Gly-68 form the J domain. The segment at Gly-136 to Thr-218 adopts a CR-type zinc-finger fold. Zn(2+)-binding residues include Cys-149, Cys-152, Cys-166, Cys-169, Cys-192, Cys-195, Cys-206, and Cys-209. CXXCXGXG motif repeat units follow at residues Cys-149 to Gly-156, Cys-166 to Gly-173, Cys-192 to Gly-199, and Cys-206 to Gly-213.

It belongs to the DnaJ family. In terms of assembly, homodimer. It depends on Zn(2+) as a cofactor.

It localises to the cytoplasm. Participates actively in the response to hyperosmotic and heat shock by preventing the aggregation of stress-denatured proteins and by disaggregating proteins, also in an autonomous, DnaK-independent fashion. Unfolded proteins bind initially to DnaJ; upon interaction with the DnaJ-bound protein, DnaK hydrolyzes its bound ATP, resulting in the formation of a stable complex. GrpE releases ADP from DnaK; ATP binding to DnaK triggers the release of the substrate protein, thus completing the reaction cycle. Several rounds of ATP-dependent interactions between DnaJ, DnaK and GrpE are required for fully efficient folding. Also involved, together with DnaK and GrpE, in the DNA replication of plasmids through activation of initiation proteins. The protein is Chaperone protein DnaJ of Synechococcus sp. (strain JA-3-3Ab) (Cyanobacteria bacterium Yellowstone A-Prime).